We begin with the raw amino-acid sequence, 649 residues long: Serine/threonine-protein kinase par-4 (649 aa).

Polar residues predominate over residues 1 to 11 (MEGPSSSSVPT). A disordered region spans residues 1 to 132 (MEGPSSSSVP…DEEAETPEEQ (132 aa)). Positions 45 to 55 (NTEKMEKEKKP) are enriched in basic and acidic residues. Acidic residues-rich tracts occupy residues 64 to 77 (PDYDYDEEDGGSCE) and 117 to 129 (DDMEDDDEEAETP). The region spanning 197–460 (YLWGGIIGTG…ISDVMQHPWF (264 aa)) is the Protein kinase domain. Residues 203-211 (IGTGSYGKV) and K226 each bind ATP. D324 functions as the Proton acceptor in the catalytic mechanism. Residues 548–649 (TLEKRPGDGP…CIFRSRTDSS (102 aa)) are disordered. Low complexity predominate over residues 597–609 (AVEVVEAVAAPEA).

This sequence belongs to the protein kinase superfamily. CAMK Ser/Thr protein kinase family. LKB1 subfamily. The cofactor is Mg(2+). Mn(2+) serves as cofactor.

It is found in the cytoplasm. It localises to the cell cortex. The catalysed reaction is L-seryl-[protein] + ATP = O-phospho-L-seryl-[protein] + ADP + H(+). The enzyme catalyses L-threonyl-[protein] + ATP = O-phospho-L-threonyl-[protein] + ADP + H(+). Functionally, required for cytoplasmic partitioning and asymmetric cell division in early embryogenesis. Phosphorylates and restricts the asymmetry effectors mex-5 and mex-6 to the anterior cytoplasm of the zygote and maintains these phosphorylations until fertilization. Phosphorylates and regulates aak-2 in response to oxidative stress. May also play a role in motility, behavioral response, regulation of lifespan and dauer formation through this pathway. In Caenorhabditis briggsae, this protein is Serine/threonine-protein kinase par-4.